A 513-amino-acid chain; its full sequence is Varicidin biosynthesis cluster-specific transcription factor (513 aa).

Positions 16–54 (CERCRLHKLKCTILPQKRFEGPQEAPEQCTRCARAKAKC) form a DNA-binding region, zn(2)-C6 fungal-type. 2 disordered regions span residues 58–92 (RRAP…MQPN) and 97–116 (VSSH…SSLK). Over residues 67–76 (SSSNDRSSVS) the composition is skewed to low complexity. Positions 77 to 92 (KGINSTTPATRTMQPN) are enriched in polar residues.

It is found in the nucleus. In terms of biological role, transcription factor that regulates the expression of the gene cluster that mediates the biosynthesis of varicidin A, an antifungal natural product containing a cis-octahydrodecalin core. In Talaromyces variabilis (Penicillium variabile), this protein is Varicidin biosynthesis cluster-specific transcription factor.